Reading from the N-terminus, the 311-residue chain is 4-hydroxy-tetrahydrodipicolinate synthase (311 aa).

Threonine 49 contacts pyruvate. Tyrosine 138 serves as the catalytic Proton donor/acceptor. Lysine 166 functions as the Schiff-base intermediate with substrate in the catalytic mechanism. Position 207 (isoleucine 207) interacts with pyruvate.

Belongs to the DapA family. In terms of assembly, homotetramer; dimer of dimers.

Its subcellular location is the cytoplasm. The catalysed reaction is L-aspartate 4-semialdehyde + pyruvate = (2S,4S)-4-hydroxy-2,3,4,5-tetrahydrodipicolinate + H2O + H(+). The protein operates within amino-acid biosynthesis; L-lysine biosynthesis via DAP pathway; (S)-tetrahydrodipicolinate from L-aspartate: step 3/4. Functionally, catalyzes the condensation of (S)-aspartate-beta-semialdehyde [(S)-ASA] and pyruvate to 4-hydroxy-tetrahydrodipicolinate (HTPA). The polypeptide is 4-hydroxy-tetrahydrodipicolinate synthase (Limosilactobacillus fermentum (strain NBRC 3956 / LMG 18251) (Lactobacillus fermentum)).